A 485-amino-acid chain; its full sequence is ATP synthase subunit beta 1 (485 aa).

Position 157–164 (Gly-157–Thr-164) interacts with ATP.

This sequence belongs to the ATPase alpha/beta chains family. In terms of assembly, F-type ATPases have 2 components, CF(1) - the catalytic core - and CF(0) - the membrane proton channel. CF(1) has five subunits: alpha(3), beta(3), gamma(1), delta(1), epsilon(1). CF(0) has three main subunits: a(1), b(2) and c(9-12). The alpha and beta chains form an alternating ring which encloses part of the gamma chain. CF(1) is attached to CF(0) by a central stalk formed by the gamma and epsilon chains, while a peripheral stalk is formed by the delta and b chains.

It localises to the cell inner membrane. It catalyses the reaction ATP + H2O + 4 H(+)(in) = ADP + phosphate + 5 H(+)(out). Its function is as follows. Produces ATP from ADP in the presence of a proton gradient across the membrane. The catalytic sites are hosted primarily by the beta subunits. The polypeptide is ATP synthase subunit beta 1 (Psychromonas ingrahamii (strain DSM 17664 / CCUG 51855 / 37)).